We begin with the raw amino-acid sequence, 95 residues long: Aspartyl/glutamyl-tRNA(Asn/Gln) amidotransferase subunit C (95 aa).

The protein belongs to the GatC family. In terms of assembly, heterotrimer of A, B and C subunits.

The enzyme catalyses L-glutamyl-tRNA(Gln) + L-glutamine + ATP + H2O = L-glutaminyl-tRNA(Gln) + L-glutamate + ADP + phosphate + H(+). It catalyses the reaction L-aspartyl-tRNA(Asn) + L-glutamine + ATP + H2O = L-asparaginyl-tRNA(Asn) + L-glutamate + ADP + phosphate + 2 H(+). Its function is as follows. Allows the formation of correctly charged Asn-tRNA(Asn) or Gln-tRNA(Gln) through the transamidation of misacylated Asp-tRNA(Asn) or Glu-tRNA(Gln) in organisms which lack either or both of asparaginyl-tRNA or glutaminyl-tRNA synthetases. The reaction takes place in the presence of glutamine and ATP through an activated phospho-Asp-tRNA(Asn) or phospho-Glu-tRNA(Gln). In Dehalococcoides mccartyi (strain ATCC BAA-2266 / KCTC 15142 / 195) (Dehalococcoides ethenogenes (strain 195)), this protein is Aspartyl/glutamyl-tRNA(Asn/Gln) amidotransferase subunit C.